We begin with the raw amino-acid sequence, 450 residues long: Na(+)/H(+) antiporter NhaA 2 (450 aa).

The next 12 helical transmembrane spans lie at 43–63 (VGGA…NSPW), 86–106 (LTLG…VVGL), 124–144 (ALPM…FVAV), 155–175 (GWAI…AVIS), 185–205 (FLLT…AVFY), 208–228 (EINL…ALCV), 234–254 (SWWL…ESGV), 258–278 (VAGV…AGGP), 299–319 (VAVP…VSGL), 326–346 (PITL…IFLT), 364–384 (WIDV…SLLI), and 398–418 (FVKV…AVLL).

The protein belongs to the NhaA Na(+)/H(+) (TC 2.A.33) antiporter family.

It is found in the cell membrane. The enzyme catalyses Na(+)(in) + 2 H(+)(out) = Na(+)(out) + 2 H(+)(in). Na(+)/H(+) antiporter that extrudes sodium in exchange for external protons. The polypeptide is Na(+)/H(+) antiporter NhaA 2 (Mycobacterium sp. (strain KMS)).